The chain runs to 314 residues: Olfactory receptor 1E1 (314 aa).

Residues 1–25 lie on the Extracellular side of the membrane; sequence MMGQNQTSISDFLLLGLPIQPEQQN. Residue asparagine 5 is glycosylated (N-linked (GlcNAc...) asparagine). A helical membrane pass occupies residues 26–49; the sequence is LCYALFLAMYLTTLLGNLLIIVLI. The Cytoplasmic portion of the chain corresponds to 50-57; that stretch reads RLDSHLHT. The helical transmembrane segment at 58–79 threads the bilayer; it reads PMYLFLSNLSFSDLCFSSVTIP. Topologically, residues 80–100 are extracellular; it reads KLLQNMQNQDPSIPYADCLTQ. Cysteine 97 and cysteine 189 are oxidised to a cystine. The chain crosses the membrane as a helical span at residues 101 to 120; it reads MYFFLLFGDLESFLLVAMAY. The Cytoplasmic segment spans residues 121–139; the sequence is DRYVAICFPLHYTAIMSPM. Residues 140–158 form a helical membrane-spanning segment; it reads LCLSVVALSWVLTTFHAML. The Extracellular segment spans residues 159–195; sequence HTLLMARLCFCADNVIPHFFCDMSALLKLACSDTRVN. The chain crosses the membrane as a helical span at residues 196 to 219; it reads EWVIFIMGGLILVIPFLLILGSYA. Residues 220-236 are Cytoplasmic-facing; the sequence is RIVSSILKVPSSKGICK. A helical transmembrane segment spans residues 237–259; it reads ALSTCGSHLSVVSLFYGTVIGLY. Residues 260-272 lie on the Extracellular side of the membrane; that stretch reads LCPSANSSTLKDT. Residues 273–292 form a helical membrane-spanning segment; sequence VMAMIYTVVTPMLNPFIYSL. Residues 293–314 are Cytoplasmic-facing; that stretch reads RNRDMKGALSRVIHQKKTFFSL.

The protein belongs to the G-protein coupled receptor 1 family.

Its subcellular location is the cell membrane. Its function is as follows. Odorant receptor. The polypeptide is Olfactory receptor 1E1 (OR1E1) (Pan troglodytes (Chimpanzee)).